Reading from the N-terminus, the 534-residue chain is GTPase Obg (534 aa).

The 158-residue stretch at 2 to 159 folds into the Obg domain; it reads ASFVDRVVLH…SDIVLELKSI (158 aa). The disordered stretch occupies residues 63–82; it reads APHRHASNGGQGMGDWRGGK. Over residues 71 to 82 the composition is skewed to gly residues; sequence GGQGMGDWRGGK. The 184-residue stretch at 160 to 343 folds into the OBG-type G domain; the sequence is ADIALVGFPS…LSFAMAELVT (184 aa). GTP is bound by residues 166 to 173, 191 to 195, 212 to 215, 295 to 298, and 324 to 326; these read GFPSAGKS, FTTLI, DVPG, NKID, and SAS. Mg(2+)-binding residues include Ser-173 and Thr-193. The OCT domain occupies 363–449; sequence PRAVNRKEFT…ENAVVFDWEP (87 aa). Positions 456-534 are disordered; the sequence is ELLSGPRGTD…AASTDDGDAL (79 aa). Composition is skewed to basic and acidic residues over residues 464 to 504 and 512 to 526; these read TDPR…ERKA and SARR…REAA.

It belongs to the TRAFAC class OBG-HflX-like GTPase superfamily. OBG GTPase family. Monomer. Requires Mg(2+) as cofactor.

The protein localises to the cytoplasm. An essential GTPase which binds GTP, GDP and possibly (p)ppGpp with moderate affinity, with high nucleotide exchange rates and a fairly low GTP hydrolysis rate. Plays a role in control of the cell cycle, stress response, ribosome biogenesis and in those bacteria that undergo differentiation, in morphogenesis control. In Renibacterium salmoninarum (strain ATCC 33209 / DSM 20767 / JCM 11484 / NBRC 15589 / NCIMB 2235), this protein is GTPase Obg.